The chain runs to 212 residues: Ribosome maturation factor RimM (212 aa).

A PRC barrel domain is found at Glu105–Asn181. Positions Asn181–Arg212 are disordered.

It belongs to the RimM family. Binds ribosomal protein uS19.

The protein resides in the cytoplasm. Functionally, an accessory protein needed during the final step in the assembly of 30S ribosomal subunit, possibly for assembly of the head region. Essential for efficient processing of 16S rRNA. May be needed both before and after RbfA during the maturation of 16S rRNA. It has affinity for free ribosomal 30S subunits but not for 70S ribosomes. The chain is Ribosome maturation factor RimM from Chelativorans sp. (strain BNC1).